Here is a 193-residue protein sequence, read N- to C-terminus: Peptidyl-tRNA hydrolase (193 aa).

Tyr-16 serves as a coordination point for tRNA. Catalysis depends on His-21, which acts as the Proton acceptor. Phe-67, Asn-69, and Asn-115 together coordinate tRNA.

This sequence belongs to the PTH family. As to quaternary structure, monomer.

Its subcellular location is the cytoplasm. It carries out the reaction an N-acyl-L-alpha-aminoacyl-tRNA + H2O = an N-acyl-L-amino acid + a tRNA + H(+). Functionally, hydrolyzes ribosome-free peptidyl-tRNAs (with 1 or more amino acids incorporated), which drop off the ribosome during protein synthesis, or as a result of ribosome stalling. Catalyzes the release of premature peptidyl moieties from peptidyl-tRNA molecules trapped in stalled 50S ribosomal subunits, and thus maintains levels of free tRNAs and 50S ribosomes. The polypeptide is Peptidyl-tRNA hydrolase (Psychrobacter cryohalolentis (strain ATCC BAA-1226 / DSM 17306 / VKM B-2378 / K5)).